The primary structure comprises 248 residues: Probable transcriptional regulatory protein Desal_2886 (248 aa).

Residues 1–21 (MAGHSKWANIQHRKGRQDAKR) form a disordered region.

Belongs to the TACO1 family.

The protein resides in the cytoplasm. This Maridesulfovibrio salexigens (strain ATCC 14822 / DSM 2638 / NCIMB 8403 / VKM B-1763) (Desulfovibrio salexigens) protein is Probable transcriptional regulatory protein Desal_2886.